A 155-amino-acid polypeptide reads, in one-letter code: MHPKRKQRLILVLFVVLVSSVGVSLTLYALNENINLFYPPTKIVNGEAPSGRTIRAGGCVVPGTVTRAKDNLEIDFDVTDGVSELSVTYDGILPDLFAEGEAVVLTGMLDHDGVFVATKVLAKHDENYMPPEVADTVTTDGVEHMKTCKGISYDS.

Topologically, residues M1–R8 are cytoplasmic. A helical; Signal-anchor for type II membrane protein membrane pass occupies residues L9–A29. Topologically, residues L30–S155 are periplasmic. 2 residues coordinate heme: H124 and Y128.

It belongs to the CcmE/CycJ family.

The protein resides in the cell inner membrane. Heme chaperone required for the biogenesis of c-type cytochromes. Transiently binds heme delivered by CcmC and transfers the heme to apo-cytochromes in a process facilitated by CcmF and CcmH. This chain is Cytochrome c-type biogenesis protein CcmE, found in Teredinibacter turnerae (strain ATCC 39867 / T7901).